The following is a 117-amino-acid chain: Large ribosomal subunit protein bL19 (117 aa).

It belongs to the bacterial ribosomal protein bL19 family.

This protein is located at the 30S-50S ribosomal subunit interface and may play a role in the structure and function of the aminoacyl-tRNA binding site. The sequence is that of Large ribosomal subunit protein bL19 from Shewanella frigidimarina (strain NCIMB 400).